The chain runs to 136 residues: uncharacterized protein (136 aa).

The first 19 residues, 1–19 (MMTAAKRLGLYSALRACSA), serve as a signal peptide directing secretion. A helical membrane pass occupies residues 75 to 97 (FWFSHTCLVFGSNTILFASLNSF).

It is found in the membrane. This is an uncharacterized protein from Saccharomyces cerevisiae (strain ATCC 204508 / S288c) (Baker's yeast).